The following is a 297-amino-acid chain: AKT-interacting protein (297 aa).

Positions methionine 1–threonine 13 are enriched in polar residues. The disordered stretch occupies residues methionine 1–leucine 45. Over residues glycine 25–serine 39 the composition is skewed to low complexity. The UBC core domain occupies tyrosine 79–serine 227. Residues lysine 262 to asparagine 297 form a disordered region.

Belongs to the ubiquitin-conjugating enzyme family. FTS subfamily.

The protein localises to the cytoplasm. Its subcellular location is the cell membrane. Its function is as follows. May function to promote vesicle trafficking and/or fusion. May also regulate apoptosis. The protein is AKT-interacting protein (aktip) of Salmo salar (Atlantic salmon).